We begin with the raw amino-acid sequence, 197 residues long: Phosphoheptose isomerase (197 aa).

In terms of domain architecture, SIS spans 37–197 (MLQCLMNDGK…CIDSVLLEGM (161 aa)). Residue 52 to 54 (NGG) coordinates substrate. Residues His61 and Glu65 each coordinate Zn(2+). Substrate-binding positions include Glu65, 94–95 (ND), 120–122 (STS), Ser125, and Gln175. Residues Gln175 and His183 each contribute to the Zn(2+) site.

It belongs to the SIS family. GmhA subfamily. As to quaternary structure, homotetramer. Requires Zn(2+) as cofactor.

It localises to the cytoplasm. The enzyme catalyses 2 D-sedoheptulose 7-phosphate = D-glycero-alpha-D-manno-heptose 7-phosphate + D-glycero-beta-D-manno-heptose 7-phosphate. The protein operates within carbohydrate biosynthesis; D-glycero-D-manno-heptose 7-phosphate biosynthesis; D-glycero-alpha-D-manno-heptose 7-phosphate and D-glycero-beta-D-manno-heptose 7-phosphate from sedoheptulose 7-phosphate: step 1/1. Its function is as follows. Catalyzes the isomerization of sedoheptulose 7-phosphate in D-glycero-D-manno-heptose 7-phosphate. This Neisseria meningitidis serogroup C / serotype 2a (strain ATCC 700532 / DSM 15464 / FAM18) protein is Phosphoheptose isomerase.